A 699-amino-acid chain; its full sequence is Dymeclin (699 aa).

A lipid anchor (N-myristoyl glycine) is attached at Gly-2. The residue at position 346 (Ser-346) is a Phosphoserine.

It belongs to the dymeclin family.

The protein is Dymeclin of Drosophila melanogaster (Fruit fly).